A 501-amino-acid polypeptide reads, in one-letter code: Xylulose kinase (501 aa).

81-82 (MH) is a binding site for substrate. The Proton acceptor role is filled by Asp239.

This sequence belongs to the FGGY kinase family.

The enzyme catalyses D-xylulose + ATP = D-xylulose 5-phosphate + ADP + H(+). Its function is as follows. Catalyzes the phosphorylation of D-xylulose to D-xylulose 5-phosphate. This chain is Xylulose kinase, found in Lactococcus lactis subsp. lactis (strain IL1403) (Streptococcus lactis).